The primary structure comprises 87 residues: Small ribosomal subunit protein bS20 (87 aa).

This sequence belongs to the bacterial ribosomal protein bS20 family.

Functionally, binds directly to 16S ribosomal RNA. The sequence is that of Small ribosomal subunit protein bS20 from Finegoldia magna (strain ATCC 29328 / DSM 20472 / WAL 2508) (Peptostreptococcus magnus).